Reading from the N-terminus, the 263-residue chain is Glutamate racemase (263 aa).

Substrate is bound by residues 13–14 (DS) and 45–46 (YG). Cys77 serves as the catalytic Proton donor/acceptor. 78-79 (NT) provides a ligand contact to substrate. The active-site Proton donor/acceptor is the Cys185. 186–187 (TH) contributes to the substrate binding site.

Belongs to the aspartate/glutamate racemases family.

The catalysed reaction is L-glutamate = D-glutamate. The protein operates within cell wall biogenesis; peptidoglycan biosynthesis. Functionally, provides the (R)-glutamate required for cell wall biosynthesis. The sequence is that of Glutamate racemase from Vibrio vulnificus (strain CMCP6).